An 816-amino-acid polypeptide reads, in one-letter code: Phosphatidylinositol 4-kinase beta (816 aa).

Disordered regions lie at residues 1 to 30, 101 to 120, and 248 to 318; these read MGDTVVEPAPLKPTSEPTSGPPGNNGGSLL, EDEMGATVASGTAKGARRRR, and AHRK…SFSS. N-acetylglycine is present on G2. Residues 2-68 are interaction with ACBD3; it reads GDTVVEPAPL…VKLLHGGMAV (67 aa). Positions 52–242 constitute a PIK helical domain; that stretch reads CQDVLEKVKL…GTKLRKLILS (191 aa). S258 carries the phosphoserine modification. A Phosphothreonine modification is found at T263. Phosphoserine is present on residues S266, S275, S277, S284, and S294. Polar residues-rich tracts occupy residues 278–297 and 306–318; these read DATASISLSSNLKRTASNPK and SSSTESIDNSFSS. The residue at position 428 (S428) is a Phosphoserine. Phosphothreonine is present on T438. Position 511 is a phosphoserine (S511). Phosphothreonine is present on residues T517 and T519. The region spanning 535-801 is the PI3K/PI4K catalytic domain; sequence EPWQEKVRRI…MVDGSMRSIT (267 aa). The tract at residues 541-547 is G-loop; the sequence is VRRIREG. A catalytic loop region spans residues 668–676; sequence QVKDRHNGN. The interval 687-711 is activation loop; sequence HIDFGFILSSSPRNLGFETSAFKLT.

The protein belongs to the PI3/PI4-kinase family. Type III PI4K subfamily. Interacts with ARF1 and ARF3 in the Golgi complex, but not with ARF4, ARF5 or ARF6. Interacts with NCS1/FREQ in a calcium-independent manner. Interacts with CALN1/CABP8 and CALN2/CABP7; in a calcium-dependent manner; this interaction competes with NCS1/FREQ binding. Interacts with ACBD3. Interacts with ARMH3, YWHAB, YWHAE, YWHAG, YWHAH, YWHAQ, YWHAZ and SFN. Interacts with GGA2 (via VHS domain); the interaction is important for PI4KB location at the Golgi apparatus membrane. Interacts with ATG9A. Requires Mg(2+) as cofactor. The cofactor is Mn(2+).

It localises to the endomembrane system. It is found in the mitochondrion outer membrane. Its subcellular location is the rough endoplasmic reticulum membrane. The protein localises to the golgi apparatus. The protein resides in the golgi apparatus membrane. The enzyme catalyses a 1,2-diacyl-sn-glycero-3-phospho-(1D-myo-inositol) + ATP = a 1,2-diacyl-sn-glycero-3-phospho-(1D-myo-inositol 4-phosphate) + ADP + H(+). Its activity is regulated as follows. Inhibited by wortmannin. Increased kinase activity upon interaction with NCS1/FREQ. Its function is as follows. Phosphorylates phosphatidylinositol (PI) in the first committed step in the production of the second messenger inositol-1,4,5,-trisphosphate (PIP). May regulate Golgi disintegration/reorganization during mitosis, possibly via its phosphorylation. Involved in Golgi-to-plasma membrane trafficking. The polypeptide is Phosphatidylinositol 4-kinase beta (PI4KB) (Plecturocebus moloch (Dusky titi monkey)).